The chain runs to 95 residues: Cell division protein FtsB (95 aa).

Residues 1–3 (MKW) are Cytoplasmic-facing. A helical membrane pass occupies residues 4–21 (VTGLLVVLLLGLQYKLWI). The Periplasmic portion of the chain corresponds to 22-95 (GEGSVAEVWQ…QVVGRPGETP (74 aa)). A coiled-coil region spans residues 26-73 (VAEVWQLRQTLEAQRAENEELRYRNAALDAEVTDLKTGLDAIEERARR).

This sequence belongs to the FtsB family. In terms of assembly, part of a complex composed of FtsB, FtsL and FtsQ.

The protein localises to the cell inner membrane. Functionally, essential cell division protein. May link together the upstream cell division proteins, which are predominantly cytoplasmic, with the downstream cell division proteins, which are predominantly periplasmic. The sequence is that of Cell division protein FtsB from Thioalkalivibrio sulfidiphilus (strain HL-EbGR7).